We begin with the raw amino-acid sequence, 380 residues long: uncharacterized protein (380 aa).

This is an uncharacterized protein from Sinorhizobium fredii (strain NBRC 101917 / NGR234).